The sequence spans 88 residues: Protein MATERNALLY EXPRESSED GENE 1 (88 aa).

A signal peptide spans 1–27 (MEYKKRVDALVFFSLLLLGYFAAHAHG). Asn-36 is a glycosylation site (N-linked (GlcNAc...) asparagine). Disulfide bonds link Cys-65/Cys-87 and Cys-68/Cys-76.

The protein belongs to the MEG family. Glycosylated. Expressed exclusively in endosperm. Found in basal endosperm transfer cells.

It localises to the secreted. The protein localises to the cell wall. It is found in the cell membrane. The protein resides in the extracellular space. Its subcellular location is the extracellular matrix. In terms of biological role, regulates maternal nutrient uptake, sucrose partitioning, and seed biomass yield. Necessary and sufficient for the establishment and differentiation of the endosperm nutrient transfer cells located at the mother:seed interface. Exclusive expression of the maternal allele at the early stages of endosperm development. The maternal allele is hypomethylated. At later stages, expression becomes biallelic. Regulated by the transcription factor MRP1. The polypeptide is Protein MATERNALLY EXPRESSED GENE 1 (MEG1) (Zea mays (Maize)).